A 1256-amino-acid chain; its full sequence is Bifunctional autolysin (1256 aa).

The signal sequence occupies residues 1-29 (MAKKFNYKLPSMVALTLVGSAVTAHQVQA). Residues 103 to 138 (GDTRANQSATTNNTQPVAKSTSTTAPKTNTNVTNAG) show a composition bias toward polar residues. Disordered stretches follow at residues 103-151 (GDTR…NSEN), 172-214 (KTAA…KTSL), and 419-440 (TQSTTTPTTPSKPTTPSKPSTG). Low complexity-rich tracts occupy residues 172–196 (KTAAPKAATTSAPKAKTEATPKVTT) and 421–439 (STTTPTTPSKPTTPSKPST). An N-acetylmuramoyl-L-alanine amidase region spans residues 199 to 775 (ASAQPRSVAA…AVAQPKTAVK (577 aa)). GW domains follow at residues 443–517 (TVAA…YNTA), 519–593 (SPVN…DTAK), 612–686 (TVSS…YNNA), 688–762 (SPVN…VPAA), 784–859 (TTQT…VQNL), 861–936 (KEVK…APTA), and 943–1017 (AAKD…KELI). An endo-beta-N-acetylglucosaminidase region spans residues 776-1256 (AYTVTKPQTT…GKYFDIPQYK (481 aa)).

The protein in the N-terminal section; belongs to the N-acetylmuramoyl-L-alanine amidase 2 family. This sequence in the C-terminal section; belongs to the glycosyl hydrolase 73 family. Oligomer; forms a ring structure at the cell surface which is important for efficient partitioning of daughter cells after cell division. In terms of processing, undergoes proteolytic processing to generate the two extracellular lytic enzymes, probably at the septal region on the cell surface.

The protein localises to the secreted. The enzyme catalyses Hydrolyzes the link between N-acetylmuramoyl residues and L-amino acid residues in certain cell-wall glycopeptides.. It catalyses the reaction an N(4)-(oligosaccharide-(1-&gt;3)-[oligosaccharide-(1-&gt;6)]-beta-D-Man-(1-&gt;4)-beta-D-GlcNAc-(1-&gt;4)-alpha-D-GlcNAc)-L-asparaginyl-[protein] + H2O = an oligosaccharide-(1-&gt;3)-[oligosaccharide-(1-&gt;6)]-beta-D-Man-(1-&gt;4)-D-GlcNAc + N(4)-(N-acetyl-beta-D-glucosaminyl)-L-asparaginyl-[protein]. In terms of biological role, endohydrolysis of the di-N-acetylchitobiosyl unit in high-mannose glycopeptides and glycoproteins containing the -[(Man)5(GlcNAc)2]-Asn structure. One N-acetyl-D-glucosamine residue remains attached to the protein; the rest of the oligosaccharide is released intact. Cleaves the peptidoglycan connecting the daughter cells at the end of the cell division cycle, resulting in the separation of the two newly divided cells. Acts as an autolysin in penicillin-induced lysis. The chain is Bifunctional autolysin (atl) from Staphylococcus aureus (strain NCTC 8325 / PS 47).